An 89-amino-acid polypeptide reads, in one-letter code: UPF0250 protein Bphy_0213 (89 aa).

Belongs to the UPF0250 family.

The protein is UPF0250 protein Bphy_0213 of Paraburkholderia phymatum (strain DSM 17167 / CIP 108236 / LMG 21445 / STM815) (Burkholderia phymatum).